The primary structure comprises 322 residues: UDP-galactose transporter homolog 1 (322 aa).

5 helical membrane passes run 4-24 (FMRQ…SWAV), 43-63 (ALLS…WNWF), 76-96 (FLGY…FGYA), 105-125 (TVIL…VFVY), and 129-149 (FPPH…IFSY). Residue Asn152 is glycosylated (N-linked (GlcNAc...) asparagine). 4 consecutive transmembrane segments (helical) span residues 164 to 184 (SPIG…TNTT), 199 to 219 (MMIA…ISPF), 250 to 270 (LFIF…ITLT), and 290 to 310 (IQWL…GLKI). Residues Asn313 and Asn314 are each glycosylated (N-linked (GlcNAc...) asparagine).

It belongs to the nucleotide-sugar transporter family. SLC35B subfamily.

It is found in the endoplasmic reticulum membrane. In terms of biological role, may be involved in specific transport of UDP-Gal from the cytosol to the Golgi lumen. Involved in the maintenance of optimal conditions for the folding of secretory pathway proteins in the endoplasmic reticulum. The protein is UDP-galactose transporter homolog 1 (hut1) of Schizosaccharomyces pombe (strain 972 / ATCC 24843) (Fission yeast).